Here is a 172-residue protein sequence, read N- to C-terminus: Protein LOL2 (172 aa).

Putative zinc finger regions lie at residues 4–34, 44–74, and 82–112; these read QIVCHGCRNILLYPRGAPSVCCAVCHAVSST, HLICGGCRTLLMYTRNATSVRCSCCDTVNLV, and HLNCGQCQTVLMYPYGAPSVKCAICNFITNT.

Its subcellular location is the nucleus. Putative zinc finger that may be involved in programmed cell death and defense response. The chain is Protein LOL2 (LOL2) from Oryza sativa subsp. japonica (Rice).